A 524-amino-acid chain; its full sequence is Probable aminopeptidase NPEPL1 (524 aa).

Positions 260 and 265 each coordinate Zn(2+). K272 is a catalytic residue. Positions 283, 342, and 344 each coordinate Zn(2+). R346 is an active-site residue.

Belongs to the peptidase M17 family. It depends on Zn(2+) as a cofactor. Requires Mn(2+) as cofactor.

Functionally, probably catalyzes the removal of unsubstituted N-terminal amino acids from various peptides. The chain is Probable aminopeptidase NPEPL1 (Npepl1) from Mus musculus (Mouse).